Here is a 245-residue protein sequence, read N- to C-terminus: 2,3-bisphosphoglycerate-dependent phosphoglycerate mutase (245 aa).

Substrate-binding positions include 8–15, 21–22, R60, 87–90, K98, 114–115, and 183–184; these read RHGQSLWN, TG, ERHY, RR, and GN. H9 functions as the Tele-phosphohistidine intermediate in the catalytic mechanism. The Proton donor/acceptor role is filled by E87.

This sequence belongs to the phosphoglycerate mutase family. BPG-dependent PGAM subfamily.

It catalyses the reaction (2R)-2-phosphoglycerate = (2R)-3-phosphoglycerate. Its pathway is carbohydrate degradation; glycolysis; pyruvate from D-glyceraldehyde 3-phosphate: step 3/5. In terms of biological role, catalyzes the interconversion of 2-phosphoglycerate and 3-phosphoglycerate. This Bacillus cereus (strain ATCC 14579 / DSM 31 / CCUG 7414 / JCM 2152 / NBRC 15305 / NCIMB 9373 / NCTC 2599 / NRRL B-3711) protein is 2,3-bisphosphoglycerate-dependent phosphoglycerate mutase.